A 327-amino-acid polypeptide reads, in one-letter code: Methionyl-tRNA formyltransferase (327 aa).

Residue 121-124 participates in (6S)-5,6,7,8-tetrahydrofolate binding; the sequence is SLLP.

This sequence belongs to the Fmt family.

The catalysed reaction is L-methionyl-tRNA(fMet) + (6R)-10-formyltetrahydrofolate = N-formyl-L-methionyl-tRNA(fMet) + (6S)-5,6,7,8-tetrahydrofolate + H(+). Its function is as follows. Attaches a formyl group to the free amino group of methionyl-tRNA(fMet). The formyl group appears to play a dual role in the initiator identity of N-formylmethionyl-tRNA by promoting its recognition by IF2 and preventing the misappropriation of this tRNA by the elongation apparatus. This Burkholderia pseudomallei (strain 1710b) protein is Methionyl-tRNA formyltransferase.